The chain runs to 294 residues: 2-dehydro-3-deoxy-phosphogluconate/2-dehydro-3-deoxy-6-phosphogalactonate aldolase (294 aa).

Substrate contacts are provided by residues threonine 43–threonine 44, tyrosine 130–tyrosine 132, and lysine 155–threonine 157. Residue lysine 155 is the Schiff-base intermediate with substrate of the active site.

The protein belongs to the DapA family. KDPG aldolase subfamily. Homotetramer; dimer of dimers.

The enzyme catalyses 2-dehydro-3-deoxy-6-phospho-D-gluconate = D-glyceraldehyde 3-phosphate + pyruvate. It catalyses the reaction 2-dehydro-3-deoxy-6-phospho-D-galactonate = D-glyceraldehyde 3-phosphate + pyruvate. It participates in carbohydrate acid metabolism; 2-dehydro-3-deoxy-D-gluconate degradation; D-glyceraldehyde 3-phosphate and pyruvate from 2-dehydro-3-deoxy-D-gluconate: step 2/2. Functionally, involved in the degradation of glucose and galactose via the Entner-Doudoroff pathway. Catalyzes the reversible cleavage of 2-keto-3-deoxy-6-phosphogluconate (KDPG) and 2-keto-3-deoxygluconate (KDG) forming pyruvate and glyceraldehyde 3-phosphate or glyceraldehyde, respectively. It is also able to catalyze the reversible cleavage of 2-keto-3-deoxy-6-phosphogalactonate (KDPGal) and 2-keto-3-deoxygalactonate (KDGal). It is equally active with both D- and L-glyceraldehyde. This is 2-dehydro-3-deoxy-phosphogluconate/2-dehydro-3-deoxy-6-phosphogalactonate aldolase from Saccharolobus solfataricus (Sulfolobus solfataricus).